A 1187-amino-acid chain; its full sequence is uncharacterized protein (1187 aa).

5 disordered regions span residues 302–405 (QKSQ…KPVG), 419–451 (QAFS…RASK), 511–551 (KAPG…LRLE), 1095–1134 (KSQR…KLPD), and 1148–1187 (PHLP…PASL). Residues 321-333 (LPLSGPAGAPPLG) are compositionally biased toward low complexity. Residues 352–361 (SRRKARHKAS) are compositionally biased toward basic residues. Low complexity-rich tracts occupy residues 422-435 (SPLL…SPAA) and 517-534 (GTTL…GEPP). Over residues 1096 to 1107 (SQRTPQGEQSRN) the composition is skewed to polar residues. Over residues 1160 to 1174 (TGGSFSSEGTGSQTS) the composition is skewed to low complexity.

This is an uncharacterized protein from Mus musculus (Mouse).